Reading from the N-terminus, the 83-residue chain is UPF0512 protein W (83 aa).

Belongs to the UPF0512 family.

In Dictyostelium discoideum (Social amoeba), this protein is UPF0512 protein W.